A 663-amino-acid polypeptide reads, in one-letter code: UvrABC system protein B (663 aa).

Over residues 1–10 (MIDKRDDKPF) the composition is skewed to basic and acidic residues. Residues 1 to 23 (MIDKRDDKPFKLKSKYKPSGDQP) are disordered. One can recognise a Helicase ATP-binding domain in the interval 31–418 (DNIEGGEKAQ…TNTIIEQIIR (388 aa)). 44–51 (GATGTGKT) is an ATP binding site. Positions 97–120 (YYDYYQPEAYVPSSDTYIEKDSSV) match the Beta-hairpin motif. The Helicase C-terminal domain occupies 435–601 (QMDDLLGEIN…TIKKDIRGLI (167 aa)). In terms of domain architecture, UVR spans 627-662 (KEAINALQKQMQEAAELLDFELAAQMRDLILELKLM).

The protein belongs to the UvrB family. As to quaternary structure, forms a heterotetramer with UvrA during the search for lesions. Interacts with UvrC in an incision complex.

It is found in the cytoplasm. The UvrABC repair system catalyzes the recognition and processing of DNA lesions. A damage recognition complex composed of 2 UvrA and 2 UvrB subunits scans DNA for abnormalities. Upon binding of the UvrA(2)B(2) complex to a putative damaged site, the DNA wraps around one UvrB monomer. DNA wrap is dependent on ATP binding by UvrB and probably causes local melting of the DNA helix, facilitating insertion of UvrB beta-hairpin between the DNA strands. Then UvrB probes one DNA strand for the presence of a lesion. If a lesion is found the UvrA subunits dissociate and the UvrB-DNA preincision complex is formed. This complex is subsequently bound by UvrC and the second UvrB is released. If no lesion is found, the DNA wraps around the other UvrB subunit that will check the other stand for damage. This Streptococcus pyogenes serotype M28 (strain MGAS6180) protein is UvrABC system protein B.